Reading from the N-terminus, the 429-residue chain is Glutamate-1-semialdehyde 2,1-aminomutase (429 aa).

Lys265 bears the N6-(pyridoxal phosphate)lysine mark.

It belongs to the class-III pyridoxal-phosphate-dependent aminotransferase family. HemL subfamily. Homodimer. Requires pyridoxal 5'-phosphate as cofactor.

It is found in the cytoplasm. The catalysed reaction is (S)-4-amino-5-oxopentanoate = 5-aminolevulinate. The protein operates within porphyrin-containing compound metabolism; protoporphyrin-IX biosynthesis; 5-aminolevulinate from L-glutamyl-tRNA(Glu): step 2/2. This chain is Glutamate-1-semialdehyde 2,1-aminomutase, found in Ectopseudomonas mendocina (strain ymp) (Pseudomonas mendocina).